A 188-amino-acid polypeptide reads, in one-letter code: MATYSSNEFRSGLKIMLDGEPCSIIESEFVKPGKGQAFVRTRIRKLISGKLLEKTFKSTDSVEGADVVDMNLIYLYNDGDFWHFMNNDTFEQLAADVKATGESAKWLVEQAECILTLWNGQPISVTPPNFVELQIVDTDPGLKGDTAGTGGKPATLTTGAVVKVPLFVQIGEIIKVDTRSGEYVSRVK.

Lys34 is modified (N6-(3,6-diaminohexanoyl)-5-hydroxylysine).

Belongs to the elongation factor P family. May be beta-lysylated on the epsilon-amino group of Lys-34 by the combined action of EpmA and EpmB, and then hydroxylated on the C5 position of the same residue by EpmC (if this protein is present). Lysylation is critical for the stimulatory effect of EF-P on peptide-bond formation. The lysylation moiety may extend toward the peptidyltransferase center and stabilize the terminal 3-CCA end of the tRNA. Hydroxylation of the C5 position on Lys-34 may allow additional potential stabilizing hydrogen-bond interactions with the P-tRNA.

It localises to the cytoplasm. It participates in protein biosynthesis; polypeptide chain elongation. In terms of biological role, involved in peptide bond synthesis. Alleviates ribosome stalling that occurs when 3 or more consecutive Pro residues or the sequence PPG is present in a protein, possibly by augmenting the peptidyl transferase activity of the ribosome. Modification of Lys-34 is required for alleviation. The protein is Elongation factor P of Hamiltonella defensa subsp. Acyrthosiphon pisum (strain 5AT).